We begin with the raw amino-acid sequence, 249 residues long: Uridylate kinase (249 aa).

Residue 23–26 (KISG) participates in ATP binding. The segment at 31–36 (GDQGFG) is involved in allosteric activation by GTP. UMP is bound at residue G65. ATP-binding residues include G66 and R70. UMP-binding positions include D85 and 146–153 (TGNPYFTT). ATP is bound by residues T173, Y179, and D182.

It belongs to the UMP kinase family. In terms of assembly, homohexamer.

It localises to the cytoplasm. The catalysed reaction is UMP + ATP = UDP + ADP. Its pathway is pyrimidine metabolism; CTP biosynthesis via de novo pathway; UDP from UMP (UMPK route): step 1/1. Its activity is regulated as follows. Allosterically activated by GTP. Inhibited by UTP. Functionally, catalyzes the reversible phosphorylation of UMP to UDP. The sequence is that of Uridylate kinase from Jannaschia sp. (strain CCS1).